The sequence spans 91 residues: Small ribosomal subunit protein uS19 (91 aa).

It belongs to the universal ribosomal protein uS19 family.

In terms of biological role, protein S19 forms a complex with S13 that binds strongly to the 16S ribosomal RNA. The chain is Small ribosomal subunit protein uS19 from Metamycoplasma hominis (strain ATCC 23114 / DSM 25592 / NBRC 14850 / NCTC 10111 / PG21) (Mycoplasma hominis).